We begin with the raw amino-acid sequence, 136 residues long: Protein Tat (136 aa).

Residues 22–37 (CTNCYCKKCCFHCPVC) are cysteine-rich. A core region spans residues 38 to 48 (FTKKALGISYG). Residues 48-57 (GRKRRGRKSA) show a composition bias toward basic residues. Residues 48–136 (GRKRRGRKSA…SGSSGSACKH (89 aa)) are disordered. Positions 49–55 (RKRRGRK) match the Nuclear localization signal, and RNA-binding (TAR) motif. Residues 58–73 (VHSTNNQDPVRQQSLP) are compositionally biased toward polar residues. The span at 104–120 (SSVSSGRTSGTSSSGYT) shows a compositional bias: low complexity. Polar residues predominate over residues 123-136 (FKTSSGSSGSACKH).

It belongs to the lentiviruses Tat family. In terms of assembly, interacts with host CCNT1. Associates with the P-TEFb complex composed at least of Tat, P-TEFb (CDK9 and CCNT1), TAR RNA, RNA Pol II. Interacts with CCNT2; the resulting complex is unable to bind to TAR RNA.

Its subcellular location is the host nucleus. The protein resides in the host nucleolus. Functionally, transcriptional activator that increases RNA Pol II processivity, thereby increasing the level of full-length viral transcripts. Recognizes a hairpin structure at the 5'-LTR of the nascent viral mRNAs referred to as the transactivation responsive RNA element (TAR) and recruits the cyclin T1-CDK9 complex (P-TEFb complex) that will in turn hyperphosphorylate the RNA polymerase II to allow efficient elongation. The CDK9 component of P-TEFb and other Tat-activated kinases hyperphosphorylate the C-terminus of RNA Pol II that becomes stabilized and much more processive. Extracellular circulating Tat can be endocytosed by surrounding uninfected cells via the binding to several surface receptors. Endosomal low pH allows Tat to cross the endosome membrane to enter the cytosol and eventually further translocate into the nucleus, thereby inducing severe cell dysfunctions ranging from cell activation to cell death. Through. This chain is Protein Tat, found in Simian immunodeficiency virus (isolate TAN1) (SIV-cpz).